The chain runs to 269 residues: Phosphatidylglycerophosphate phosphatase 1, chloroplastic (269 aa).

The transit peptide at 1–33 (MRSVPGPSPPCTRSLAHSCRAAARGPCGSARPR) directs the protein to the chloroplast. The disordered stretch occupies residues 25 to 46 (GPCGSARPRARSVSARAHSSEA). Low complexity predominate over residues 29-46 (SARPRARSVSARAHSSEA). The Phosphoryl acceptor signature appears at 103 to 107 (DKDNT).

The protein belongs to the HAD-like hydrolase superfamily.

Its subcellular location is the plastid. It localises to the chloroplast. It carries out the reaction a 1,2-diacyl-sn-glycero-3-phospho-(1'-sn-glycero-3'-phosphate) + H2O = a 1,2-diacyl-sn-glycero-3-phospho-(1'-sn-glycerol) + phosphate. The protein operates within phospholipid metabolism; phosphatidylglycerol biosynthesis; phosphatidylglycerol from CDP-diacylglycerol: step 2/2. Functionally, phosphatidylglycerophosphate phosphatase involved in the biosynthesis of phosphatidylglycerol (PG), a phosphoglycerolipid predominantly present in chloroplastic thylakoid membranes and which has important photosynthetic function. Required for thylakoid membranes development and chloroplast function. The chain is Phosphatidylglycerophosphate phosphatase 1, chloroplastic from Chlamydomonas reinhardtii (Chlamydomonas smithii).